The sequence spans 351 residues: Vacuolar protein sorting-associated protein 72 homolog (351 aa).

The segment at methionine 1–serine 136 is disordered. Residues glutamine 36 to glutamate 72 show a composition bias toward acidic residues. Residues serine 56, serine 59, and serine 68 each carry the phosphoserine modification. Residues alanine 87 to lysine 100 are compositionally biased toward basic and acidic residues. Residues leucine 105–proline 121 are compositionally biased toward basic residues. A coiled-coil region spans residues glutamine 142–serine 202. The DNA-binding element occupies lysine 156–threonine 208.

This sequence belongs to the VPS72/YL1 family. As to quaternary structure, interacts with H2AV. Component of the Tip60 chromatin-remodeling complex which contains the catalytic subunit Tip60 and the subunits Domino, Tra1, Brd8, E(Pc), DMAP1, Pontin, Reptin, Ing3, Act87E, BAP55, Mrg15, MrgBP, Gas41 and YL-1.

The protein resides in the nucleus. Its function is as follows. Part of the Tip60 chromatin-remodeling complex which is involved in DNA repair. Upon induction of DNA double-strand breaks, this complex acetylates phosphorylated H2AV in nucleosomes and exchanges it with unmodified H2AV. This Drosophila melanogaster (Fruit fly) protein is Vacuolar protein sorting-associated protein 72 homolog (YL-1).